The primary structure comprises 761 residues: Centrosomal protein of 85 kDa (761 aa).

Disordered regions lie at residues 1–33 (MAMQEKYPNDRSHATSPGSNVIQKGSSLGTEWQ) and 95–117 (PSTLGASPAKPNSAPSGPSSAKL). The segment covering 14 to 33 (ATSPGSNVIQKGSSLGTEWQ) has biased composition (polar residues). Serine 16 is modified (phosphoserine). Serine 140 bears the Phosphoserine mark. Disordered stretches follow at residues 226-279 (KAPG…GEQS) and 435-472 (KHSEEGKKQEERVKGRDKHINNLKKKCQKESEQNREKQ). The segment at 256–432 (GLSKSLSSQV…QLIRESLKVT (177 aa)) is mediates interaction with NEK2 and is required for its function in the suppression of centrosome disjunction. Coiled coils occupy residues 333-656 (EHLL…RQAQ) and 723-749 (DVIRRKLEEVQQLRHDIEDLRTSLSDR). A required for centrosome localization and for its function in the suppression of centrosome disjunction region spans residues 433 to 475 (LQKHSEEGKKQEERVKGRDKHINNLKKKCQKESEQNREKQQRI). 2 stretches are compositionally biased toward basic and acidic residues: residues 435–454 (KHSEEGKKQEERVKGRDKHI) and 462–472 (QKESEQNREKQ).

The protein belongs to the CEP85 family. As to quaternary structure, homodimer. Interacts with STIL (via N-terminus); this interaction is essential for robust PLK4 activation and efficient centriole assembly and for PLK4-dependent cell migration. Interacts with PLK4; required for CEP85 to be able to drive centriole duplication and cell migration.

The protein resides in the cytoplasm. It is found in the cytoskeleton. The protein localises to the microtubule organizing center. Its subcellular location is the centrosome. It localises to the spindle pole. The protein resides in the nucleus. It is found in the nucleolus. The protein localises to the centriole. Its subcellular location is the cell cortex. Functionally, acts as a regulator of centriole duplication through a direct interaction with STIL, a key factor involved in the early steps of centriole formation. The CEP85-STIL protein complex acts as a modulator of PLK4-driven cytoskeletal rearrangements and directional cell motility. Acts as a negative regulator of NEK2 to maintain the centrosome integrity in interphase. Suppresses centrosome disjunction by inhibiting NEK2 kinase activity. In Mus musculus (Mouse), this protein is Centrosomal protein of 85 kDa (Cep85).